Reading from the N-terminus, the 105-residue chain is Synaptic plasticity regulator PANTS (105 aa).

Belongs to the UPF0545 family. Interacts with RTN4 isoform A/Nogo-A; the interaction results in enhanced RTN4-mediated inhibition of AMPA receptor clustering. Also interacts with NCAM1, RANBP2 and CCT8. Post-translationally, rapidly degraded by proteolysis following neuronal stimulation, resulting in increased AMPA receptor clustering. In terms of tissue distribution, in the postnatal brain, expressed diffusely throughout the hippocampus at a low level at 8 weeks (at protein level). At 16 weeks, strongly expressed in the stratum lucidum of the hippocampus (at protein level). In developing and aging brain, expression is strongest in hippocampus, especially in areas CA3 and CA2, throughout the dorsoventral axis.

Its subcellular location is the synapse. The protein resides in the synaptic cleft. Functionally, negatively regulates long-term potentiation and modulates adult synaptic plasticity. Stabilizes the interaction of RTN4 isoform A/Nogo-A with its receptors, inhibiting clustering of postsynaptic AMPA receptors at synaptic sites. Upon neuronal stimulation, degraded at synapses, reducing RTN4 signaling and allowing AMPA receptor clustering at individual synapses. This chain is Synaptic plasticity regulator PANTS, found in Mus musculus (Mouse).